The following is a 364-amino-acid chain: Small ribosomal subunit biogenesis GTPase RsgA (364 aa).

Residues 101–264 enclose the CP-type G domain; it reads KGLVEKPGVP…VIDTPGLREL (164 aa). GTP is bound by residues 154-157 and 206-214; these read NKSD and GSSGAGKST. Zn(2+) is bound by residues cysteine 288, cysteine 293, histidine 295, and cysteine 301. The disordered stretch occupies residues 339–364; sequence QVAQKRKRKTIPRQGKRWRREHGDGQ. The span at 342-358 shows a compositional bias: basic residues; it reads QKRKRKTIPRQGKRWRR.

Belongs to the TRAFAC class YlqF/YawG GTPase family. RsgA subfamily. In terms of assembly, monomer. Associates with 30S ribosomal subunit, binds 16S rRNA. Zn(2+) serves as cofactor.

It localises to the cytoplasm. One of several proteins that assist in the late maturation steps of the functional core of the 30S ribosomal subunit. Helps release RbfA from mature subunits. May play a role in the assembly of ribosomal proteins into the subunit. Circularly permuted GTPase that catalyzes slow GTP hydrolysis, GTPase activity is stimulated by the 30S ribosomal subunit. In Syntrophotalea carbinolica (strain DSM 2380 / NBRC 103641 / GraBd1) (Pelobacter carbinolicus), this protein is Small ribosomal subunit biogenesis GTPase RsgA.